The following is a 457-amino-acid chain: Cell division protein FtsZ (457 aa).

GTP contacts are provided by residues 26–30 (GGGGN), 115–117 (GTG), E146, K150, and D193. Positions 429-447 (KKDVVRSEESERPAFESER) are enriched in basic and acidic residues. Residues 429-457 (KKDVVRSEESERPAFESERSSSPTTISFN) form a disordered region. Residues 448 to 457 (SSSPTTISFN) show a composition bias toward polar residues.

It belongs to the FtsZ family. In terms of assembly, homodimer. Polymerizes to form a dynamic ring structure in a strictly GTP-dependent manner. Interacts directly with several other division proteins.

The protein localises to the cytoplasm. Functionally, essential cell division protein that forms a contractile ring structure (Z ring) at the future cell division site. The regulation of the ring assembly controls the timing and the location of cell division. One of the functions of the FtsZ ring is to recruit other cell division proteins to the septum to produce a new cell wall between the dividing cells. Binds GTP and shows GTPase activity. The chain is Cell division protein FtsZ from Porphyromonas gingivalis (strain ATCC BAA-308 / W83).